The primary structure comprises 309 residues: Serpentine receptor class gamma-47 (309 aa).

5 consecutive transmembrane segments (helical) span residues 22-42, 140-160, 190-210, 230-250, and 272-292; these read IVQMFYGTITVVFMLILLFLF, FKLYYVILCGISIFFTSVLPL, IYSSVYFIILLLVGIISIFYI, LITLVYGFLYSGILLWSILMA, and ISSDLITLSLPYILLIFDVGI.

Belongs to the nematode receptor-like protein srg family.

It is found in the membrane. The chain is Serpentine receptor class gamma-47 (srg-47) from Caenorhabditis elegans.